The chain runs to 366 residues: NADH-quinone oxidoreductase subunit D (366 aa).

The protein belongs to the complex I 49 kDa subunit family. As to quaternary structure, NDH-1 is composed of 14 different subunits. Subunits NuoB, C, D, E, F, and G constitute the peripheral sector of the complex.

Its subcellular location is the cell membrane. It catalyses the reaction a quinone + NADH + 5 H(+)(in) = a quinol + NAD(+) + 4 H(+)(out). Its function is as follows. NDH-1 shuttles electrons from NADH, via FMN and iron-sulfur (Fe-S) centers, to quinones in the respiratory chain. The immediate electron acceptor for the enzyme in this species is believed to be a menaquinone. Couples the redox reaction to proton translocation (for every two electrons transferred, four hydrogen ions are translocated across the cytoplasmic membrane), and thus conserves the redox energy in a proton gradient. The protein is NADH-quinone oxidoreductase subunit D of Bacillus cereus (strain ATCC 10987 / NRS 248).